Consider the following 802-residue polypeptide: Leucine--tRNA ligase (802 aa).

Positions 40 to 51 match the 'HIGH' region motif; the sequence is PYPSGAGLHVGH. Positions 576–580 match the 'KMSKS' region motif; sequence KMSKS. Lysine 579 contacts ATP.

The protein belongs to the class-I aminoacyl-tRNA synthetase family.

The protein resides in the cytoplasm. It catalyses the reaction tRNA(Leu) + L-leucine + ATP = L-leucyl-tRNA(Leu) + AMP + diphosphate. The protein is Leucine--tRNA ligase of Bacillus cereus (strain ATCC 14579 / DSM 31 / CCUG 7414 / JCM 2152 / NBRC 15305 / NCIMB 9373 / NCTC 2599 / NRRL B-3711).